The chain runs to 31 residues: Cytochrome b6-f complex subunit 6 (31 aa).

A helical membrane pass occupies residues 4–24 (LISYISLLAGFVIIASVFYLA).

The protein belongs to the PetL family. In terms of assembly, the 4 large subunits of the cytochrome b6-f complex are cytochrome b6, subunit IV (17 kDa polypeptide, PetD), cytochrome f and the Rieske protein, while the 4 small subunits are PetG, PetL, PetM and PetN. The complex functions as a dimer.

It is found in the plastid. Its subcellular location is the chloroplast thylakoid membrane. Its function is as follows. Component of the cytochrome b6-f complex, which mediates electron transfer between photosystem II (PSII) and photosystem I (PSI), cyclic electron flow around PSI, and state transitions. PetL is important for photoautotrophic growth as well as for electron transfer efficiency and stability of the cytochrome b6-f complex. This is Cytochrome b6-f complex subunit 6 from Tupiella akineta (Green alga).